The sequence spans 280 residues: UPF0494 membrane protein SPAC212.01c (280 aa).

Helical transmembrane passes span 107-127 (WPLLIIWSIIIVFAVDKKFEV), 144-164 (IWVPIAIYVCLLVLMLLSLIF), 178-198 (VIIAVLGAVLGMIIAVLGMII), and 199-219 (AALGMIIAALGATITGLLYFG).

It belongs to the UPF0494 family.

The protein localises to the membrane. The polypeptide is UPF0494 membrane protein SPAC212.01c (Schizosaccharomyces pombe (strain 972 / ATCC 24843) (Fission yeast)).